Reading from the N-terminus, the 644-residue chain is MFQDNPLLAQLKQQLHSQTPRAEGVVKGTEKGFGFLEVDAQKSYFIPPPQMKKVMHGDRIVAVIHSEKERESAEPESLVEPFLTRFVGKVQKKDDRLAIVPDHPLLKDAIPCRAARGVEHDFKQGDWAVAEMRRHPLKGDRGFYAELTQFITFSDDHFVPWWVTLARHNLEKEAPDGVATEMLDEGLTRRDLTALDFVTIDSASTEDMDDALYAESTADGKLLLTVAIADPTAWIAEGSKLDNAAKVRAFTNYLPGFNIPMLPRELSDDLCSLRANEVRPVLACRMTLAADGTIEDNIEFFAATIESKAKLAYDDVSDWLEGRGSWQPDSEAIAQQITLLKDVCQRRSEWRQTHALVFKDRPDYRFVLGEKGEVLDIVAEPRRIANRIVEESMIAANICAARVLRDKLGFGVYNVHTGFDPANTEQLAALLKTHDVHVDPTEVLTLEGFCKLRRELDAQPTGFLDSRIRRFQSFAEISTEPGPHFGLGLEAYATWTSPIRKYGDMINHRLLKAIIKGETIARPQDEATVQMAERRRLNRMAERDVADWLYARFLNDKAGTDTRFAAEIIDVSRGGMRVRLVDNGAVAFIPAPFLHAVRDELVCSQENGTVQIKGEVVYKVTDVIDVTIAEVRMETRSIIARPAV.

In terms of domain architecture, RNB spans 189–516; the sequence is RRDLTALDFV…NHRLLKAIIK (328 aa). The S1 motif domain occupies 561-643; the sequence is DTRFAAEIID…ETRSIIARPA (83 aa).

The protein belongs to the RNR ribonuclease family. RNase II subfamily.

It localises to the cytoplasm. The enzyme catalyses Exonucleolytic cleavage in the 3'- to 5'-direction to yield nucleoside 5'-phosphates.. Its function is as follows. Involved in mRNA degradation. Hydrolyzes single-stranded polyribonucleotides processively in the 3' to 5' direction. The protein is Exoribonuclease 2 of Klebsiella pneumoniae subsp. pneumoniae (strain ATCC 700721 / MGH 78578).